The chain runs to 775 residues: Metal transporter CNNM4 (775 aa).

Residues 1-178 (MAPVGGGGRP…LLFMVEEPGR (178 aa)) are Extracellular-facing. Residues N85 and N122 are each glycosylated (N-linked (GlcNAc...) asparagine). The region spanning 178-358 (RFLPLWLHIL…EPYNDLVKEE (181 aa)) is the CNNM transmembrane domain. The chain crosses the membrane as a helical span at residues 179 to 199 (FLPLWLHILLITVLLVLSGIF). Topologically, residues 200-240 (SGLNLGLMALDPMELRIVQNCGTEKERRYARKIEPIRRKGN) are cytoplasmic. Positions 241–261 (YLLCSLLLGNVLVNTSLTILL) form an intramembrane region, helical. The Cytoplasmic segment spans residues 262 to 264 (DNL). The helical transmembrane segment at 265–285 (IGSGLMAVASSTIGIVIFGEI) threads the bilayer. The Extracellular portion of the chain corresponds to 286–293 (LPQALCSR). The helical transmembrane segment at 294–316 (HGLAVGANTILLTKFFMLLTFPL) threads the bilayer. The Cytoplasmic segment spans residues 317–775 (SFPISKLLDF…LHKASHENAI (459 aa)). 2 consecutive CBS domains span residues 377–438 (MTQL…CTPL) and 445–511 (YNHP…ILDE). Phosphoserine occurs at positions 660, 664, and 770.

The protein belongs to the ACDP family. As to quaternary structure, interacts with COX11. As to expression, widely expressed. Highly expressed in heart.

Its subcellular location is the cell membrane. Functionally, probable metal transporter. The interaction with the metal ion chaperone COX11 suggests that it may play a role in sensory neuron functions. May play a role in biomineralization and retinal function. The polypeptide is Metal transporter CNNM4 (CNNM4) (Homo sapiens (Human)).